Here is a 416-residue protein sequence, read N- to C-terminus: MKCCRIMFVLLGLWFVFGLSVPGGRTEAASLRANDAPIVLLHGFTGWGREEMFGFKYWGGVRGDIEQWLNDNGYRTYTLAVGPLSSNWDRACEAYAQLVGGTVDYGAAHAAKHGHARFGRTYPGLLPELKRGGRIHIIAHSQGGQTARMLVSLLENGSQEEREYAKAHNVSLSPLFEGGHHFVLSVTTIATPHDGTTLVNMVDFTDRFFDLQKAVLEAAAVASNVPYTSQVYDFKLDQWGLRRQPGESFDHYFERLKRSPVWTSTDTARYDLSVSGAEKLNQWVQASPNTYYLSFSTERTYRGALTGNHYPELGMNAFSAVVCAPFLGSYRNPTLGIDDRWLENDGIVNTVSMNGPKRGSSDRIVPYDGTLKKGVWNDMGTYNVDHLEIIGVDPNPSFDIRAFYLRLAEQLASLRP.

A signal peptide spans 1–28; that stretch reads MKCCRIMFVLLGLWFVFGLSVPGGRTEA. Serine 141 acts as the Nucleophile in catalysis. Residue glycine 314 participates in Ca(2+) binding. Catalysis depends on aspartate 345, which acts as the Charge relay system. Aspartate 385 lines the Ca(2+) pocket. The Charge relay system role is filled by histidine 386. Residues glutamate 388, aspartate 393, and proline 394 each coordinate Ca(2+).

The protein belongs to the AB hydrolase superfamily. In terms of assembly, homodimer.

Its subcellular location is the secreted. It carries out the reaction a triacylglycerol + H2O = a diacylglycerol + a fatty acid + H(+). Its activity is regulated as follows. Activity is inhibited by zinc and iron ions, and activated in vitro in 25% v/v DMSO and acetone. Its function is as follows. Triacylglycerol hydrolase that shows hydrolysis preference towards some of the natural oils such as olive, sunflower and corn oils. The polypeptide is Lipase (Bacillus sp).